The sequence spans 78 residues: Large ribosomal subunit protein bL28 (78 aa).

It belongs to the bacterial ribosomal protein bL28 family.

The sequence is that of Large ribosomal subunit protein bL28 from Prochlorococcus marinus (strain MIT 9301).